The chain runs to 140 residues: Organic hydroperoxide resistance protein-like 1 (140 aa).

The protein belongs to the OsmC/Ohr family.

In Staphylococcus epidermidis (strain ATCC 35984 / DSM 28319 / BCRC 17069 / CCUG 31568 / BM 3577 / RP62A), this protein is Organic hydroperoxide resistance protein-like 1.